The chain runs to 147 residues: Cyanate hydratase (147 aa).

Active-site residues include Arg-88, Glu-91, and Ser-114.

This sequence belongs to the cyanase family.

It catalyses the reaction cyanate + hydrogencarbonate + 3 H(+) = NH4(+) + 2 CO2. Functionally, catalyzes the reaction of cyanate with bicarbonate to produce ammonia and carbon dioxide. This is Cyanate hydratase from Prochlorococcus marinus subsp. pastoris (strain CCMP1986 / NIES-2087 / MED4).